The sequence spans 2376 residues: Reducing polyketide synthase DEP5 (2376 aa).

The region spanning Leu47 to Ser477 is the Ketosynthase family 3 (KS3) domain. Residues Cys221, His358, and His399 each act as for beta-ketoacyl synthase activity in the active site. The malonyl-CoA:ACP transacylase (MAT) domain stretch occupies residues Val593–Phe906. Ser685 functions as the For malonyltransferase activity in the catalytic mechanism. An N-terminal hotdog fold region spans residues His983–Arg1121. The interval His983–Met1158 is dehydratase (DH) domain. Residues His983–Gln1286 form the PKS/mFAS DH domain. His1015 functions as the Proton acceptor; for dehydratase activity in the catalytic mechanism. Residues Leu1131–Gln1286 are C-terminal hotdog fold. Asp1195 serves as the catalytic Proton donor; for dehydratase activity. The interval Gly1659–Ile1964 is enoyl reductase (ER) domain. Residues Ala1988–Met2163 are ketoreductase (KR) domain. Positions Asp2289–Gln2368 constitute a Carrier domain. The residue at position 2327 (Ser2327) is an O-(pantetheine 4'-phosphoryl)serine.

It participates in polyketide biosynthesis. In terms of biological role, reducing polyketide synthase; part of the gene cluster that mediates the biosynthesis of depudecin, a highly oxidized eleven-carbon linear polyketide that acts as a histone deacetylase (HDAC) inhibitor and makes a small contribution to pathogenesis. The reducing polyketide synthase DEP5 is the central enzyme in depudecin biosynthesis by yielding the backbone polyketide chain. The monooxygenases DEP2 and DEP4, as well as the uncharacterized protein DEP1, then act as tailoring enzymes to modify the intermediate polyketide chain into depudecin. In Alternaria brassicicola (Dark leaf spot agent), this protein is Reducing polyketide synthase DEP5.